A 338-amino-acid polypeptide reads, in one-letter code: Short-chain dehydrogenase/reductase phmF (338 aa).

NADP(+) is bound by residues L46, R71, D96, and N123. S177 functions as the Proton donor in the catalytic mechanism. Positions 211 and 215 each coordinate NADP(+). Y211 (proton acceptor) is an active-site residue. K215 (lowers pKa of active site Tyr) is an active-site residue.

Belongs to the short-chain dehydrogenases/reductases (SDR) family.

The protein operates within mycotoxin biosynthesis. Its function is as follows. Short-chain dehydrogenase/reductase; part of the gene cluster that mediates the biosynthesis of the mycotoxins phomacins, leucine-derived cytochalasans with potent actin polymerization-inhibitory activities and monocot-specific antigerminative activities. The first step in the pathway is catalyzed by the hybrid PKS-NRPS phmA, assisted by the enoyl reductase phmE, that are responsible for fusion of the leucine precursor and the polyketide backbone to produce a 2-pyrrolidone intermediate. The polyketide synthase module (PKS) of phmA is responsible for the synthesis of the polyketide backbone and the downstream nonribosomal peptide synthetase (NRPS) amidates the carboxyl end of the polyketide with the leucine precursor. Because phmA lacks a designated enoylreductase (ER) domain, the required activity is provided the enoyl reductase phmE. Reduction by the hydrolyase phmG, followed by dehydration and intra-molecular Diels-Alder cyclization by the Diels-Alderase phmD then yield the required isoindolone-fused macrocycle. A number of oxidative steps catalyzed by the tailoring cytochrome P450 monooxygenase phmB, the FAD-linked oxidoreductase phmC and the short-chain dehydrogenase/reductase phmF, are further required to afford the final products, phomacin D and phomacin E. The polypeptide is Short-chain dehydrogenase/reductase phmF (Phaeosphaeria nodorum (strain SN15 / ATCC MYA-4574 / FGSC 10173) (Glume blotch fungus)).